Reading from the N-terminus, the 441-residue chain is Zinc finger and BTB domain-containing protein 8A (441 aa).

The BTB domain maps to 24 to 92 (CDCSILVEGK…VYSGKLSLTG (69 aa)). 2 stretches are compositionally biased toward polar residues: residues 146-170 (ERSS…SPDQ) and 178-197 (KSWS…QQPL). The segment at 146-252 (ERSSFYSSGW…SEEQAQMNAE (107 aa)) is disordered. Residues Ser-161 and Ser-167 each carry the phosphoserine modification. Residues Lys-178, Lys-182, and Lys-199 each participate in a glycyl lysine isopeptide (Lys-Gly) (interchain with G-Cter in SUMO2) cross-link. Basic and acidic residues predominate over residues 198–208 (TKHEQRKDSIK). A compositionally biased stretch (low complexity) spans 234-248 (SDSSSHASQSEEQAQ). 2 consecutive C2H2-type zinc fingers follow at residues 282-304 (FKCP…LRCH) and 310-333 (YPCQ…RTIH). A Glycyl lysine isopeptide (Lys-Gly) (interchain with G-Cter in SUMO2) cross-link involves residue Lys-437.

Its subcellular location is the nucleus. Functionally, may be involved in transcriptional regulation. This chain is Zinc finger and BTB domain-containing protein 8A (ZBTB8A), found in Bos taurus (Bovine).